The chain runs to 94 residues: Phormicin (94 aa).

A signal peptide spans 1-23 (MKFFMVFVVTFCLAVCFVSQSLA). Positions 24–54 (IPADAANDAHFVDGVQALKEIEPELHGRYKR) are excised as a propeptide. Cystine bridges form between Cys57–Cys84, Cys70–Cys90, and Cys74–Cys92.

It belongs to the invertebrate defensin family. Type 1 subfamily.

It localises to the secreted. Functionally, responsible for the anti Gram-positive activity of immune hemolymph of P.terraenovae. This is Phormicin from Protophormia terraenovae (Northern blowfly).